The following is a 757-amino-acid chain: Elongation factor G, mitochondrial (757 aa).

The transit peptide at 1–41 (MLERAALLHRLRLPAHSLPFIYNGALFGGAKRSFSATSKRC) directs the protein to the mitochondrion. The 282-residue stretch at 66–347 (KLLRNIGVSA…AIVDYLPEPS (282 aa)) folds into the tr-type G domain. GTP contacts are provided by residues 75–82 (AHIDSGKT), 146–150 (DTPGH), and 200–203 (NKMD).

The protein belongs to the TRAFAC class translation factor GTPase superfamily. Classic translation factor GTPase family. EF-G/EF-2 subfamily.

It is found in the mitochondrion. It functions in the pathway protein biosynthesis; polypeptide chain elongation. Functionally, mitochondrial GTPase that catalyzes the GTP-dependent ribosomal translocation step during translation elongation. During this step, the ribosome changes from the pre-translocational (PRE) to the post-translocational (POST) state as the newly formed A-site-bound peptidyl-tRNA and P-site-bound deacylated tRNA move to the P and E sites, respectively. Catalyzes the coordinated movement of the two tRNA molecules, the mRNA and conformational changes in the ribosome. This is Elongation factor G, mitochondrial from Eremothecium gossypii (strain ATCC 10895 / CBS 109.51 / FGSC 9923 / NRRL Y-1056) (Yeast).